Here is a 408-residue protein sequence, read N- to C-terminus: Indian hedgehog protein (408 aa).

A signal peptide spans 1 to 23 (MKPARLLLLLSGCALLLAPAVRC). Residue cysteine 24 is the site of N-palmitoyl cysteine attachment. Ca(2+)-binding residues include glutamate 90, glutamate 91, aspartate 96, threonine 126, glutamate 127, aspartate 130, and aspartate 132. The Zn(2+) site is built by histidine 141, aspartate 148, and histidine 183. Residue glycine 198 is the site of Cholesterol glycine ester attachment.

It belongs to the hedgehog family. In terms of assembly, multimer. As to quaternary structure, interacts with BOC and CDON. Interacts with PTCH1. Interacts with glypican GPC3. Cholesterylation is required for N-product targeting to lipid rafts and multimerization. In terms of processing, the C-terminal domain displays an autoproteolysis activity and a cholesterol transferase activity. Both activities result in the cleavage of the full-length protein and covalent attachment of a cholesterol moiety to the C-terminal of the newly generated N-product. The N-product is the active species in both local and long-range signaling, whereas the C-product is degraded in the endoplasmic reticulum. Post-translationally, N-palmitoylation by HHAT of N-product is required for indian hedgehog protein N-product multimerization and full activity. Expressed in developing midgut, lung and cartilage of developing long bones in the limb.

It is found in the cell membrane. It localises to the endoplasmic reticulum membrane. The protein localises to the golgi apparatus membrane. Its subcellular location is the secreted. The enzyme catalyses glycyl-L-cysteinyl-[protein] + cholesterol + H(+) = [protein]-C-terminal glycyl cholesterol ester + N-terminal L-cysteinyl-[protein]. In terms of biological role, plays a role in embryonic morphogenesis; it is involved in the regulation of endochondral skeleton formation, and the development of retinal pigment epithelium (RPE), photoreceptors and periocular tissues. The C-terminal part of the indian hedgehog protein precursor displays an autoproteolysis and a cholesterol transferase activity. Both activities result in the cleavage of the full-length protein into two parts followed by the covalent attachment of a cholesterol moiety to the C-terminal of the newly generated N-product. Both activities occur in the endoplasmic reticulum. Functionally, the dually lipidated indian hedgehog protein N-product is a morphogen which is essential for a variety of patterning events during development. Binds to the patched (PTCH1) receptor, which functions in association with smoothened (SMO), to activate the transcription of target genes. Plays a role in morphogenesis of the skeleton by coordinating growth and differentiation of the endochondral skeleton. Positively regulates PTHLH expression during endochondral bone formation preventing chondrocyte hypertrophy. In contrast, participates in normal chondrocyte proliferation in a PTHLH-independent pathway. The sequence is that of Indian hedgehog protein from Gallus gallus (Chicken).